Reading from the N-terminus, the 291-residue chain is Pantothenate synthetase (291 aa).

An ATP-binding site is contributed by 30 to 37 (MGYLHAGH). The Proton donor role is filled by H37. Q61 contacts (R)-pantoate. Q61 provides a ligand contact to beta-alanine. An ATP-binding site is contributed by 147 to 150 (GEKD). Q153 contributes to the (R)-pantoate binding site. ATP is bound by residues V176 and 184–187 (LSSR).

The protein belongs to the pantothenate synthetase family. Homodimer.

Its subcellular location is the cytoplasm. The enzyme catalyses (R)-pantoate + beta-alanine + ATP = (R)-pantothenate + AMP + diphosphate + H(+). It functions in the pathway cofactor biosynthesis; (R)-pantothenate biosynthesis; (R)-pantothenate from (R)-pantoate and beta-alanine: step 1/1. In terms of biological role, catalyzes the condensation of pantoate with beta-alanine in an ATP-dependent reaction via a pantoyl-adenylate intermediate. This is Pantothenate synthetase from Rhizobium rhizogenes (strain K84 / ATCC BAA-868) (Agrobacterium radiobacter).